Here is a 970-residue protein sequence, read N- to C-terminus: Serine/threonine-protein kinase PLK4 (970 aa).

The Protein kinase domain maps to 12–265; sequence FKVGNLLGKG…LSSVLDHPFM (254 aa). Residues 18–26 and K41 contribute to the ATP site; that span reads LGKGSFAGV. An N6-acetyllysine mark is found at K45 and K46. The active-site Proton acceptor is D136. Disordered stretches follow at residues 323-458 and 497-538; these read TVFP…NHLC and SISP…HSVK. Polar residues predominate over residues 328 to 356; sequence NKSSTDFSSSGDGNSFYTQWGNQETSNSG. The segment covering 360-369 has biased composition (basic and acidic residues); that stretch reads VIQDAEERPH. Residues 379–393 show a composition bias toward polar residues; the sequence is SDRSGTSNSQSQAKT. At S401 the chain carries Phosphoserine. Residues 438–454 show a composition bias toward polar residues; it reads SSSSGSFERPDNNQALS. The segment covering 504 to 515 has biased composition (basic and acidic residues); it reads FQGHPDLQKDTS. Residues 586 to 699 enclose the Cryptic POLO box 1 (CPB1) domain; sequence TLRSITSPLV…SRFVQLVRSK (114 aa). S665 is modified (phosphoserine). The Cryptic POLO box 2 (CPB2) domain occupies 700-813; the sequence is SPKITYFTRY…GRKPGSTSSP (114 aa). The tract at residues 808–828 is disordered; that stretch reads GSTSSPKALSPPPSVDSNYPT. S817 is modified (phosphoserine). One can recognise a POLO box domain in the interval 886–964; it reads QLLKSVFVKN…LSSILLMFSN (79 aa).

Belongs to the protein kinase superfamily. Ser/Thr protein kinase family. CDC5/Polo subfamily. Homodimer. Interacts with CEP152 (via N-terminus). Interacts with CEP78; this interaction may be important for proper PLK4 localization to the centriole and PLK4-induced overduplication of centrioles. Interacts with CEP131. Interacts simultaneously with TENT5C and CEP192. Interacts with TENT5C; this interaction leads to the TENT5C recruitment in the centrosome. Interacts with CEP85; this interaction may be important in cell migration and centriole assembly. Acetylation by KAT2A and KAT2B impairs kinase activity by shifting the kinase to an inactive conformation. In terms of processing, ubiquitinated; leading to its degradation by the proteasome. Deubiquitinated by USP54; leading to PLK4 stabilization. Post-translationally, tyrosine-phosphorylated by TEC.

The protein resides in the cytoplasm. The protein localises to the cytoskeleton. It is found in the microtubule organizing center. Its subcellular location is the centrosome. It localises to the centriole. The protein resides in the nucleus. The protein localises to the nucleolus. It is found in the cleavage furrow. It catalyses the reaction L-seryl-[protein] + ATP = O-phospho-L-seryl-[protein] + ADP + H(+). It carries out the reaction L-threonyl-[protein] + ATP = O-phospho-L-threonyl-[protein] + ADP + H(+). Functionally, serine/threonine-protein kinase that plays a central role in centriole duplication. Able to trigger procentriole formation on the surface of the parental centriole cylinder, leading to the recruitment of centriole biogenesis proteins such as SASS6, CPAP, CCP110, CEP135 and gamma-tubulin. When overexpressed, it is able to induce centrosome amplification through the simultaneous generation of multiple procentrioles adjoining each parental centriole during S phase. Phosphorylates 'Ser-151' of FBXW5 during the G1/S transition, leading to inhibit FBXW5 ability to ubiquitinate SASS6. Its central role in centriole replication suggests a possible role in tumorigenesis, centrosome aberrations being frequently observed in tumors. Also involved in deuterosome-mediated centriole amplification in multiciliated that can generate more than 100 centrioles. Also involved in trophoblast differentiation by phosphorylating HAND1, leading to disrupt the interaction between HAND1 and MDFIC and activate HAND1. Phosphorylates CDC25C and CHEK2. Required for the recruitment of STIL to the centriole and for STIL-mediated centriole amplification. Phosphorylates CEP131 at 'Ser-78' and PCM1 at 'Ser-372' which is essential for proper organization and integrity of centriolar satellites. The polypeptide is Serine/threonine-protein kinase PLK4 (Homo sapiens (Human)).